The primary structure comprises 119 residues: Ribonuclease P protein component (119 aa).

This sequence belongs to the RnpA family. As to quaternary structure, consists of a catalytic RNA component (M1 or rnpB) and a protein subunit.

The catalysed reaction is Endonucleolytic cleavage of RNA, removing 5'-extranucleotides from tRNA precursor.. RNaseP catalyzes the removal of the 5'-leader sequence from pre-tRNA to produce the mature 5'-terminus. It can also cleave other RNA substrates such as 4.5S RNA. The protein component plays an auxiliary but essential role in vivo by binding to the 5'-leader sequence and broadening the substrate specificity of the ribozyme. The polypeptide is Ribonuclease P protein component (Aeromonas salmonicida (strain A449)).